The sequence spans 131 residues: Translation initiation factor 5A (131 aa).

Lys-37 is modified (hypusine).

It belongs to the eIF-5A family.

Its subcellular location is the cytoplasm. Functions by promoting the formation of the first peptide bond. The polypeptide is Translation initiation factor 5A (eIF5A) (Methanococcus maripaludis (strain C5 / ATCC BAA-1333)).